The primary structure comprises 380 residues: Chaperone protein DnaJ (380 aa).

The 66-residue stretch at Asp5 to Gly70 folds into the J domain. Residues Gly137–His215 form a CR-type zinc finger. Zn(2+) contacts are provided by Cys150, Cys153, Cys167, Cys170, Cys189, Cys192, Cys203, and Cys206. CXXCXGXG motif repeat units lie at residues Cys150–Gly157, Cys167–Gly174, Cys189–Gly196, and Cys203–Gly210. The tract at residues Ile222 to Pro247 is disordered.

Belongs to the DnaJ family. Homodimer. Requires Zn(2+) as cofactor.

It is found in the cytoplasm. In terms of biological role, participates actively in the response to hyperosmotic and heat shock by preventing the aggregation of stress-denatured proteins and by disaggregating proteins, also in an autonomous, DnaK-independent fashion. Unfolded proteins bind initially to DnaJ; upon interaction with the DnaJ-bound protein, DnaK hydrolyzes its bound ATP, resulting in the formation of a stable complex. GrpE releases ADP from DnaK; ATP binding to DnaK triggers the release of the substrate protein, thus completing the reaction cycle. Several rounds of ATP-dependent interactions between DnaJ, DnaK and GrpE are required for fully efficient folding. Also involved, together with DnaK and GrpE, in the DNA replication of plasmids through activation of initiation proteins. The polypeptide is Chaperone protein DnaJ (Nitrosococcus oceani (strain ATCC 19707 / BCRC 17464 / JCM 30415 / NCIMB 11848 / C-107)).